We begin with the raw amino-acid sequence, 1023 residues long: 2-oxoglutarate dehydrogenase complex component E1 (1023 aa).

The N-terminal 40 residues, 1–40 (MFHLRTCAAKLRPLTASQTVKTFSQNRPAAARTFQQIRCY), are a transit peptide targeting the mitochondrion. K74 bears the N6-succinyllysine mark. Residue S100 is modified to Phosphoserine. Ca(2+) is bound by residues H143, D156, and D158. R312 contacts thiamine diphosphate. Residue K401 is modified to N6-acetyllysine. Residues D411, N444, and I446 each coordinate thiamine diphosphate. Positions 411, 444, and 446 each coordinate Mg(2+). K534 participates in a covalent cross-link: Glycyl lysine isopeptide (Lys-Gly) (interchain with G-Cter in ubiquitin). Position 564 is an N6-succinyllysine (K564). A thiamine diphosphate-binding site is contributed by Q676. K970 carries the N6-acetyllysine modification.

This sequence belongs to the alpha-ketoglutarate dehydrogenase family. Homodimer. The 2-oxoglutarate dehydrogenase complex is composed of OGDH (2-oxoglutarate dehydrogenase; E1), DLST (dihydrolipoamide succinyltransferase; E2), DLD (dihydrolipoamide dehydrogenase; E3) and the assembly factor KGD4. It contains multiple copies of the three enzymatic components (E1, E2 and E3). In the nucleus, the 2-oxoglutarate dehydrogenase complex associates with KAT2A. Interacts with ABHD11; this interaction maintains the functional lipoylation of the 2-oxoglutarate dehydrogenase complex. It depends on thiamine diphosphate as a cofactor. Requires Mg(2+) as cofactor.

The protein localises to the mitochondrion. It localises to the nucleus. The enzyme catalyses N(6)-[(R)-lipoyl]-L-lysyl-[protein] + 2-oxoglutarate + H(+) = N(6)-[(R)-S(8)-succinyldihydrolipoyl]-L-lysyl-[protein] + CO2. Calcium ions and ADP stimulate, whereas ATP and NADH reduce catalytic activity. Functionally, 2-oxoglutarate dehydrogenase (E1o) component of the 2-oxoglutarate dehydrogenase complex (OGDHC). Participates in the first step, rate limiting for the overall conversion of 2-oxoglutarate to succinyl-CoA and CO(2) catalyzed by the whole OGDHC. Catalyzes the irreversible decarboxylation of 2-oxoglutarate (alpha-ketoglutarate) via the thiamine diphosphate (ThDP) cofactor and subsequent transfer of the decarboxylated acyl intermediate on an oxidized dihydrolipoyl group that is covalently amidated to the E2 enzyme (dihydrolipoyllysine-residue succinyltransferase or DLST). Plays a key role in the Krebs (citric acid) cycle, which is a common pathway for oxidation of fuel molecules, including carbohydrates, fatty acids, and amino acids. Can catalyze the decarboxylation of 2-oxoadipate in vitro, but at a much lower rate than 2-oxoglutarate. Mainly active in the mitochondrion. A fraction of the 2-oxoglutarate dehydrogenase complex also localizes in the nucleus and is required for lysine succinylation of histones: associates with KAT2A on chromatin and provides succinyl-CoA to histone succinyltransferase KAT2A. This chain is 2-oxoglutarate dehydrogenase complex component E1, found in Macaca fascicularis (Crab-eating macaque).